A 1188-amino-acid polypeptide reads, in one-letter code: Phospholipid-transporting ATPase IB (1188 aa).

Residues Met1 to Arg94 lie on the Cytoplasmic side of the membrane. Thr45 is modified (phosphothreonine). The helical transmembrane segment at Ala95–Thr115 threads the bilayer. At Gly116–Thr119 the chain is on the extracellular side. Residues Thr120–Phe140 form a helical membrane-spanning segment. Residues Lys141–Gln316 are Cytoplasmic-facing. The helical transmembrane segment at Ile317–Tyr337 threads the bilayer. The Extracellular segment spans residues Trp338–Leu364. A helical membrane pass occupies residues Thr365–Val385. Over Lys386 to Val887 the chain is Cytoplasmic. Asp428 functions as the 4-aspartylphosphate intermediate in the catalytic mechanism. Residues Asp428, Lys429, Thr430, Glu528, Phe569, Lys592, Arg625, Thr705, Gly706, Asp707, Arg795, and Lys801 each coordinate ATP. Asp428 contacts Mg(2+). Thr430 is a binding site for Mg(2+). Position 821 (Asp821) interacts with Mg(2+). ATP-binding residues include Asn824 and Asp825. Asp825 provides a ligand contact to Mg(2+). The chain crosses the membrane as a helical span at residues Val888 to Phe908. The Extracellular segment spans residues Glu909 to Arg910. The helical transmembrane segment at Trp911–Phe931 threads the bilayer. Residues Glu932 to Lys959 are Cytoplasmic-facing. A helical transmembrane segment spans residues Val960–Met980. Over Lys981–Tyr997 the chain is Extracellular. A helical transmembrane segment spans residues Leu998–Leu1018. Residues Glu1019 to His1028 are Cytoplasmic-facing. A helical membrane pass occupies residues Leu1029 to Trp1049. At Pro1050–Thr1063 the chain is on the extracellular side. The chain crosses the membrane as a helical span at residues Met1064–Ile1084. Residues Glu1085–Lys1188 are Cytoplasmic-facing. Positions Ser1162–Lys1188 are disordered. A compositionally biased stretch (basic and acidic residues) spans Gln1163–Lys1182.

Belongs to the cation transport ATPase (P-type) (TC 3.A.3) family. Type IV subfamily. In terms of assembly, component of a P4-ATPase flippase complex which consists of a catalytic alpha subunit and an accessory beta subunit. Interacts with TMEM30A to form a flippase complex. It depends on Mg(2+) as a cofactor. In terms of tissue distribution, strongly expressed in the brain, cerebellum, retina and testis.

Its subcellular location is the membrane. It is found in the golgi apparatus membrane. The protein resides in the endosome membrane. It localises to the cell membrane. The protein localises to the photoreceptor outer segment membrane. Its subcellular location is the photoreceptor inner segment membrane. It catalyses the reaction ATP + H2O + phospholipidSide 1 = ADP + phosphate + phospholipidSide 2.. It carries out the reaction a 1,2-diacyl-sn-glycero-3-phospho-L-serine(out) + ATP + H2O = a 1,2-diacyl-sn-glycero-3-phospho-L-serine(in) + ADP + phosphate + H(+). The catalysed reaction is a 1,2-diacyl-sn-glycero-3-phosphoethanolamine(in) + ATP + H2O = a 1,2-diacyl-sn-glycero-3-phosphoethanolamine(out) + ADP + phosphate + H(+). Functionally, catalytic component of a P4-ATPase flippase complex which catalyzes the hydrolysis of ATP coupled to the transport of aminophospholipids from the outer to the inner leaflet of various membranes and ensures the maintenance of asymmetric distribution of phospholipids. Able to translocate phosphatidylserine, but not phosphatidylcholine. Phospholipid translocation also seems to be implicated in vesicle formation and in uptake of lipid signaling molecules. Reconstituted to liposomes, the ATP8A2:TMEM30A flippase complex predominantly transports phosphatidylserine (PS) and to a lesser extent phosphatidylethanolamine (PE). Phospholipid translocation is not associated with a countertransport of an inorganic ion or other charged substrate from the cytoplasmic side toward the exoplasm in connection with the phosphorylation from ATP. ATP8A2:TMEM30A may be involved in regulation of neurite outgrowth. Proposed to function in the generation and maintenance of phospholipid asymmetry in photoreceptor disk membranes and neuronal axon membranes. May be involved in vesicle trafficking in neuronal cells. Required for normal visual and auditory function; involved in photoreceptor and inner ear spiral ganglion cell survival. The sequence is that of Phospholipid-transporting ATPase IB from Homo sapiens (Human).